A 161-amino-acid chain; its full sequence is Phosphopantetheine adenylyltransferase (161 aa).

T9 is a binding site for substrate. Residues 9-10 and H17 contribute to the ATP site; that span reads TF. Substrate contacts are provided by K41, L73, and R87. ATP-binding positions include 88-90, E98, and 123-129; these read GLR and YQFISGT.

The protein belongs to the bacterial CoaD family. Homohexamer. It depends on Mg(2+) as a cofactor.

Its subcellular location is the cytoplasm. It carries out the reaction (R)-4'-phosphopantetheine + ATP + H(+) = 3'-dephospho-CoA + diphosphate. The protein operates within cofactor biosynthesis; coenzyme A biosynthesis; CoA from (R)-pantothenate: step 4/5. Functionally, reversibly transfers an adenylyl group from ATP to 4'-phosphopantetheine, yielding dephospho-CoA (dPCoA) and pyrophosphate. The protein is Phosphopantetheine adenylyltransferase of Cupriavidus necator (strain ATCC 17699 / DSM 428 / KCTC 22496 / NCIMB 10442 / H16 / Stanier 337) (Ralstonia eutropha).